A 31-amino-acid polypeptide reads, in one-letter code: Photosystem II reaction center protein T (31 aa).

Residues alanine 3 to phenylalanine 23 form a helical membrane-spanning segment.

The protein belongs to the PsbT family. In terms of assembly, PSII is composed of 1 copy each of membrane proteins PsbA, PsbB, PsbC, PsbD, PsbE, PsbF, PsbH, PsbI, PsbJ, PsbK, PsbL, PsbM, PsbT, PsbX, PsbY, Psb30/Ycf12, peripheral proteins PsbO, CyanoQ (PsbQ), PsbU, PsbV and a large number of cofactors. It forms dimeric complexes.

The protein resides in the cellular thylakoid membrane. Found at the monomer-monomer interface of the photosystem II (PS II) dimer, plays a role in assembly and dimerization of PSII. PSII is a light-driven water plastoquinone oxidoreductase, using light energy to abstract electrons from H(2)O, generating a proton gradient subsequently used for ATP formation. This Prochlorococcus marinus (strain MIT 9211) protein is Photosystem II reaction center protein T.